Consider the following 902-residue polypeptide: Probable polyribonucleotide nucleotidyltransferase 1, chloroplastic (902 aa).

Residues 1 to 66 (MLATPGALHH…RRRAAGARVR (66 aa)) constitute a chloroplast transit peptide. Residues 44-53 (VAASASTSRR) show a composition bias toward low complexity. A disordered region spans residues 44–93 (VAASASTSRRGGARRRAAGARVRASVGEEAPPVVTEEASTSGGPTKFSTK). Over residues 80 to 91 (EASTSGGPTKFS) the composition is skewed to polar residues. Residues 693 to 753 (PLIHVMKVKP…SSLEKSKAII (61 aa)) enclose the KH domain. The S1 motif domain maps to 763 to 832 (GEIYRNCEIK…DKGQLRLSSR (70 aa)). The interval 833–902 (ALLPDANQES…ASQGSEMGTE (70 aa)) is disordered. Residues 839-850 (NQESSSKQQAGG) show a composition bias toward polar residues. Positions 852 to 862 (TREKAPQKDNL) are enriched in basic and acidic residues. Low complexity predominate over residues 877 to 888 (EASTAENNATAS).

Belongs to the polyribonucleotide nucleotidyltransferase family.

Its subcellular location is the plastid. It localises to the chloroplast. It catalyses the reaction RNA(n+1) + phosphate = RNA(n) + a ribonucleoside 5'-diphosphate. Involved in the metabolism of all major classes of plastid RNAs. Required for efficient 3'-end processing of mRNAs and 3'-end maturation of rRNA transcripts, but is not sufficient to mediate their degradation. Mediates tRNA degradation. May function as a poly(A) mRNA 3'-5' degrading phosphorylase. In Oryza sativa subsp. japonica (Rice), this protein is Probable polyribonucleotide nucleotidyltransferase 1, chloroplastic (PNP1).